Here is a 359-residue protein sequence, read N- to C-terminus: DNA polymerase IV (359 aa).

Positions 4–185 constitute a UmuC domain; it reads IIHIDMDCYF…LPLSKIPGVG (182 aa). Residues Asp-8 and Asp-103 each contribute to the Mg(2+) site. Residue Glu-104 is part of the active site.

Belongs to the DNA polymerase type-Y family. In terms of assembly, monomer. Requires Mg(2+) as cofactor.

Its subcellular location is the cytoplasm. The enzyme catalyses DNA(n) + a 2'-deoxyribonucleoside 5'-triphosphate = DNA(n+1) + diphosphate. Its function is as follows. Poorly processive, error-prone DNA polymerase involved in untargeted mutagenesis. Copies undamaged DNA at stalled replication forks, which arise in vivo from mismatched or misaligned primer ends. These misaligned primers can be extended by PolIV. Exhibits no 3'-5' exonuclease (proofreading) activity. May be involved in translesional synthesis, in conjunction with the beta clamp from PolIII. In Shewanella frigidimarina (strain NCIMB 400), this protein is DNA polymerase IV.